Reading from the N-terminus, the 67-residue chain is Teratocyte protein CftICK-II (67 aa).

A signal peptide spans 1 to 25; it reads MVKSLLFAIGYLIFLLVTRVNVINA. Cystine bridges form between Cys-28–Cys-42, Cys-35–Cys-46, and Cys-41–Cys-57.

In terms of tissue distribution, abundantly expressed by teratocytes, which are extra-embryonic cells released by parasitoid wasps into their hosts during larval eclosion.

It localises to the secreted. This endoparasitoid wasp peptide has immununosuppressive, antimicrobial and insecticidal activities. Suppress cellular immunity which is detectable as a reduction of hemocyte encapsulation in the host. Shows moderate antifungal activity against C.albicans (MIC=4 ug/ml). In vivo, ingestion of this peptide (probably at excessive doses) increases larval mortality and reduces leaf consumption of D.saccharalis, a permissive host for C.flavipes. The chain is Teratocyte protein CftICK-II from Cotesia flavipes (Parasitic wasp).